A 561-amino-acid polypeptide reads, in one-letter code: Putative transport protein YbjL (561 aa).

5 consecutive transmembrane segments (helical) span residues 8-28, 32-52, 66-86, 94-114, and 158-178; these read LLNG…LCLG, LGSI…LLGQ, FMLF…SIFF, MLAL…GKLF, and NLSL…IVGA. RCK C-terminal domains are found at residues 200-288 and 292-373; these read RGLD…SFRN and VFDR…RIGF. Transmembrane regions (helical) follow at residues 383 to 403, 406 to 426, 451 to 471, 475 to 495, and 540 to 560; these read LLAF…TFQF, FSFG…LGFM, VFMA…LGAI, MLIA…LFGA, and AIAN…WPGL.

It belongs to the AAE transporter (TC 2.A.81) family. YbjL subfamily.

The protein resides in the cell membrane. The polypeptide is Putative transport protein YbjL (Shigella flexneri).